The sequence spans 426 residues: Gamma-glutamyl phosphate reductase (426 aa).

This sequence belongs to the gamma-glutamyl phosphate reductase family.

The protein resides in the cytoplasm. The catalysed reaction is L-glutamate 5-semialdehyde + phosphate + NADP(+) = L-glutamyl 5-phosphate + NADPH + H(+). The protein operates within amino-acid biosynthesis; L-proline biosynthesis; L-glutamate 5-semialdehyde from L-glutamate: step 2/2. Catalyzes the NADPH-dependent reduction of L-glutamate 5-phosphate into L-glutamate 5-semialdehyde and phosphate. The product spontaneously undergoes cyclization to form 1-pyrroline-5-carboxylate. This Nitrobacter winogradskyi (strain ATCC 25391 / DSM 10237 / CIP 104748 / NCIMB 11846 / Nb-255) protein is Gamma-glutamyl phosphate reductase.